Consider the following 317-residue polypeptide: Ribosomal protein L11 methyltransferase (317 aa).

The S-adenosyl-L-methionine site is built by Thr-158, Gly-179, Asp-201, and Asn-244.

Belongs to the methyltransferase superfamily. PrmA family.

The protein localises to the cytoplasm. The catalysed reaction is L-lysyl-[protein] + 3 S-adenosyl-L-methionine = N(6),N(6),N(6)-trimethyl-L-lysyl-[protein] + 3 S-adenosyl-L-homocysteine + 3 H(+). Methylates ribosomal protein L11. This chain is Ribosomal protein L11 methyltransferase, found in Streptococcus equi subsp. zooepidemicus (strain H70).